A 494-amino-acid chain; its full sequence is BTB/POZ domain and ankyrin repeat-containing protein NH5.2 (494 aa).

The BTB domain maps to 25 to 131 (SDVAFSVEGR…LYSGQASVAA (107 aa)). The tract at residues 60-95 (NHQPPPPPPPPLNWPTAGGGGGGSGGGGRGGAGGGG) is disordered. A compositionally biased stretch (pro residues) spans 61 to 72 (HQPPPPPPPPLN). Over residues 76–95 (AGGGGGGSGGGGRGGAGGGG) the composition is skewed to gly residues. A C2HC NPR-type zinc finger spans residues 137–151 (LPGCGARGCWHTRCG). 4 residues coordinate Zn(2+): Cys-140, Cys-145, His-147, and Cys-150. ANK repeat units follow at residues 275-303 (NKIR…GLDL), 304-334 (DDAL…DVNS), 339-368 (TGKT…DPNS), and 372-406 (DGVT…KLRL). Disordered stretches follow at residues 421-443 (DDGA…PRSD) and 471-494 (GEGR…NGFA).

This sequence belongs to the plant 'ANKYRIN-BTB/POZ' family. 'NOOT-BOP-COCH-like' (NBCL) subfamily. As to quaternary structure, homodimer. Interacts with TGAL5, TGAL7, TGAL8 and TGAL9.

It is found in the nucleus. Its subcellular location is the cytoplasm. It participates in protein modification; protein ubiquitination. In terms of biological role, may act as a substrate-specific adapter of an E3 ubiquitin-protein ligase complex (CUL3-RBX1-BTB) which mediates the ubiquitination and subsequent proteasomal degradation of target proteins. Transcriptional co-regulator involved in the promotion of leaf and floral meristem fate and determinacy. Required for the abscission of senescent organs, probably by regulating the cell wall disorganization in abscission zones (AZs, e.g. pulvini at the base of leaves). This is BTB/POZ domain and ankyrin repeat-containing protein NH5.2 from Oryza sativa subsp. japonica (Rice).